A 217-amino-acid polypeptide reads, in one-letter code: Homologous-pairing protein 2 homolog (217 aa).

Residues 84 to 152 adopt a coiled-coil conformation; the sequence is ADLHGLDASI…RLKNIKAATN (69 aa). The tract at residues 118 to 182 is DNA-binding; the sequence is TSALTTPEMQ…WRKRKRMTTE (65 aa).

This sequence belongs to the HOP2 family. In terms of assembly, interacts with the DNA-binding domain of the nuclear receptors NR3C1/GR, ESR2/ER-beta, THRB and RXRA. Forms a stable heterodimer with MND1. Interacts with PSMC3/TBP1. Phosphorylated by PKA, PKC and MAPK. As to expression, highly expressed in testis and more specifically in spermatocytes. Detected in spleen, ovary and thymus.

The protein localises to the nucleus. Functionally, plays an important role in meiotic recombination. Stimulates DMC1-mediated strand exchange required for pairing homologous chromosomes during meiosis. The complex PSMC3IP/MND1 binds DNA, stimulates the recombinase activity of DMC1 as well as DMC1 D-loop formation from double-strand DNA. This complex stabilizes presynaptic RAD51 and DMC1 filaments formed on single strand DNA to capture double-strand DNA. This complex stimulates both synaptic and presynaptic critical steps in RAD51 and DMC1-promoted homologous pairing. May inhibit HIV-1 viral protein TAT activity and modulate the activity of proteasomes through association with PSMC3. This chain is Homologous-pairing protein 2 homolog (Psmc3ip), found in Mus musculus (Mouse).